A 144-amino-acid chain; its full sequence is Large ribosomal subunit protein uL11 (144 aa).

This sequence belongs to the universal ribosomal protein uL11 family. As to quaternary structure, part of the ribosomal stalk of the 50S ribosomal subunit. Interacts with L10 and the large rRNA to form the base of the stalk. L10 forms an elongated spine to which L12 dimers bind in a sequential fashion forming a multimeric L10(L12)X complex. One or more lysine residues are methylated.

Functionally, forms part of the ribosomal stalk which helps the ribosome interact with GTP-bound translation factors. This is Large ribosomal subunit protein uL11 from Polaromonas naphthalenivorans (strain CJ2).